Here is a 282-residue protein sequence, read N- to C-terminus: MSKQEKYAGASALQGLSLGQQSAYISQYSPALLQPVPRSLNRDDLGLTGELPFQGCDVWTLYELSWLNARGKPMVAVGEVSVPAVSANLIESKSFKLYLNSFNQTRCDSLEAVQAMLVKDLSACAGSEVSVTLFPLAQAPHHIAALPGECIDEQDIEVDCYEFDANLLQGAAGNDEVEETLHSHLLKSNCLVTSQPDWGSVVIHYRGPRLDREKLLRYLISFRQHNEFHEQCIERIFTDLKLLCHPSQLTVYARYTRRGGLDINPFRSDWELPPTNLRLIRQ.

90–92 is a substrate binding site; the sequence is IES. 92-93 is an NADPH binding site; sequence SK. Cys190 (thioimide intermediate) is an active-site residue. The active-site Proton donor is Asp197. Residue 229–230 participates in substrate binding; that stretch reads HE. Residue 258-259 participates in NADPH binding; sequence RG.

The protein belongs to the GTP cyclohydrolase I family. QueF type 2 subfamily. In terms of assembly, homodimer.

It is found in the cytoplasm. The catalysed reaction is 7-aminomethyl-7-carbaguanine + 2 NADP(+) = 7-cyano-7-deazaguanine + 2 NADPH + 3 H(+). It functions in the pathway tRNA modification; tRNA-queuosine biosynthesis. Functionally, catalyzes the NADPH-dependent reduction of 7-cyano-7-deazaguanine (preQ0) to 7-aminomethyl-7-deazaguanine (preQ1). This Aeromonas salmonicida (strain A449) protein is NADPH-dependent 7-cyano-7-deazaguanine reductase.